We begin with the raw amino-acid sequence, 101 residues long: MAKKSAVNRNERVKKLVKQYAAKREALKAIANDESLPLEERFEARLKLAELPRNSAAVRIRNRCEVTGRPRAYYRKLKMSRVSLRELGSHGLIPGLVKSSW.

The protein belongs to the universal ribosomal protein uS14 family. Part of the 30S ribosomal subunit. Contacts proteins S3 and S10.

Its function is as follows. Binds 16S rRNA, required for the assembly of 30S particles and may also be responsible for determining the conformation of the 16S rRNA at the A site. The protein is Small ribosomal subunit protein uS14 of Phenylobacterium zucineum (strain HLK1).